The chain runs to 450 residues: Chromosomal replication initiator protein DnaA (450 aa).

Residues 1–69 (MHDVWRQATE…VGALSVTAGK (69 aa)) form a domain I, interacts with DnaA modulators region. The interval 69–113 (KKYFIELVVQEEDQNAEVPQAEDLIIKGHQEIEQPVTSQPETSSS) is domain II. Residues 114-330 (SLNPKYTFEL…GMLIRLGAYS (217 aa)) form a domain III, AAA+ region region. ATP contacts are provided by Gly-158, Gly-160, Lys-161, and Ser-162. Residues 331–450 (SLQGIPITLD…IEDIKLILLK (120 aa)) are domain IV, binds dsDNA.

This sequence belongs to the DnaA family. As to quaternary structure, oligomerizes as a right-handed, spiral filament on DNA at oriC.

Its subcellular location is the cytoplasm. Functionally, plays an essential role in the initiation and regulation of chromosomal replication. ATP-DnaA binds to the origin of replication (oriC) to initiate formation of the DNA replication initiation complex once per cell cycle. Binds the DnaA box (a 9 base pair repeat at the origin) and separates the double-stranded (ds)DNA. Forms a right-handed helical filament on oriC DNA; dsDNA binds to the exterior of the filament while single-stranded (ss)DNA is stabiized in the filament's interior. The ATP-DnaA-oriC complex binds and stabilizes one strand of the AT-rich DNA unwinding element (DUE), permitting loading of DNA polymerase. After initiation quickly degrades to an ADP-DnaA complex that is not apt for DNA replication. Binds acidic phospholipids. The chain is Chromosomal replication initiator protein DnaA from Pelobacter propionicus (strain DSM 2379 / NBRC 103807 / OttBd1).